Reading from the N-terminus, the 1054-residue chain is Translation initiation factor IF-2 (1054 aa).

Disordered regions lie at residues 48–390 (RSKL…LDLD) and 409–458 (LARP…GTEP). Residues 65–76 (KPPSESLPPEPP) show a composition bias toward pro residues. Residues 160-169 (SEATQKPETV) are compositionally biased toward polar residues. A compositionally biased stretch (low complexity) spans 179–193 (SESAAAKASGSEPSP). 2 stretches are compositionally biased toward pro residues: residues 221-235 (PQKA…PSEA) and 304-316 (PTRP…PPEP). Over residues 365–378 (RAARVQAKRKRSRR) the composition is skewed to basic residues. Over residues 421 to 437 (PPAATAAPPARPRPAAR) the composition is skewed to low complexity. A tr-type G domain is found at 545–718 (SRPPVVTIMG…LLVADVAELQ (174 aa)). Residues 554–561 (GHVDHGKT) are G1. 554 to 561 (GHVDHGKT) provides a ligand contact to GTP. The interval 579 to 583 (GITQR) is G2. Residues 604–607 (DTPG) are G3. GTP-binding positions include 604 to 608 (DTPGH) and 658 to 661 (NKID). The segment at 658 to 661 (NKID) is G4. The G5 stretch occupies residues 694–696 (SAL).

This sequence belongs to the TRAFAC class translation factor GTPase superfamily. Classic translation factor GTPase family. IF-2 subfamily.

The protein resides in the cytoplasm. In terms of biological role, one of the essential components for the initiation of protein synthesis. Protects formylmethionyl-tRNA from spontaneous hydrolysis and promotes its binding to the 30S ribosomal subunits. Also involved in the hydrolysis of GTP during the formation of the 70S ribosomal complex. The sequence is that of Translation initiation factor IF-2 from Synechococcus sp. (strain JA-2-3B'a(2-13)) (Cyanobacteria bacterium Yellowstone B-Prime).